A 588-amino-acid polypeptide reads, in one-letter code: 2-isopropylmalate synthase (588 aa).

The Pyruvate carboxyltransferase domain occupies 40–314 (PRWCAVDLRD…DPQIDFSDLD (275 aa)). Mg(2+) contacts are provided by Asp49, His253, His255, and Asn289. The segment at 456–588 (APLDRVEEKW…TVREPELAAV (133 aa)) is regulatory domain.

It belongs to the alpha-IPM synthase/homocitrate synthase family. LeuA type 2 subfamily. In terms of assembly, homodimer. Mg(2+) serves as cofactor.

It localises to the cytoplasm. It catalyses the reaction 3-methyl-2-oxobutanoate + acetyl-CoA + H2O = (2S)-2-isopropylmalate + CoA + H(+). It participates in amino-acid biosynthesis; L-leucine biosynthesis; L-leucine from 3-methyl-2-oxobutanoate: step 1/4. In terms of biological role, catalyzes the condensation of the acetyl group of acetyl-CoA with 3-methyl-2-oxobutanoate (2-ketoisovalerate) to form 3-carboxy-3-hydroxy-4-methylpentanoate (2-isopropylmalate). The sequence is that of 2-isopropylmalate synthase from Clavibacter sepedonicus (Clavibacter michiganensis subsp. sepedonicus).